Here is a 335-residue protein sequence, read N- to C-terminus: Phosphate acyltransferase (335 aa).

The protein belongs to the PlsX family. Homodimer. Probably interacts with PlsY.

It localises to the cytoplasm. The enzyme catalyses a fatty acyl-[ACP] + phosphate = an acyl phosphate + holo-[ACP]. Its pathway is lipid metabolism; phospholipid metabolism. Functionally, catalyzes the reversible formation of acyl-phosphate (acyl-PO(4)) from acyl-[acyl-carrier-protein] (acyl-ACP). This enzyme utilizes acyl-ACP as fatty acyl donor, but not acyl-CoA. The chain is Phosphate acyltransferase from Desulforudis audaxviator (strain MP104C).